A 366-amino-acid chain; its full sequence is Leucine dehydrogenase (366 aa).

Residue lysine 82 is part of the active site. 182-188 (GVGNVAY) is a binding site for NAD(+).

The protein belongs to the Glu/Leu/Phe/Val dehydrogenases family.

It carries out the reaction L-leucine + NAD(+) + H2O = 4-methyl-2-oxopentanoate + NH4(+) + NADH + H(+). Its pathway is amino-acid degradation; L-leucine degradation; 4-methyl-2-oxopentanoate from L-leucine (dehydrogenase route): step 1/1. Functionally, catalyzes the reversible deamination of L-leucine to 4-methyl-2-oxopentanoate. This is Leucine dehydrogenase (ldh) from Bacillus cereus.